Here is a 93-residue protein sequence, read N- to C-terminus: Photosystem I iron-sulfur center (93 aa).

4Fe-4S ferredoxin-type domains follow at residues 13-43 (KDHEIRIYSTCIGCTQCVRACPTDVLEMVPS) and 50-80 (QVVTVPRIEDCVGCKRCESACPTDFLSIRVY). [4Fe-4S] cluster-binding residues include Cys-23, Cys-26, Cys-29, Cys-33, Cys-60, Cys-63, Cys-66, and Cys-70.

In terms of assembly, the eukaryotic PSI reaction center is composed of at least 11 subunits. [4Fe-4S] cluster serves as cofactor.

The protein localises to the plastid. The protein resides in the chloroplast thylakoid membrane. It carries out the reaction reduced [plastocyanin] + hnu + oxidized [2Fe-2S]-[ferredoxin] = oxidized [plastocyanin] + reduced [2Fe-2S]-[ferredoxin]. Its function is as follows. Apoprotein for the two 4Fe-4S centers FA and FB of photosystem I (PSI); essential for photochemical activity. FB is the terminal electron acceptor of PSI, donating electrons to ferredoxin. The C-terminus interacts with PsaA/B/D and helps assemble the protein into the PSI complex. Required for binding of PsaD and PsaE to PSI. PSI is a plastocyanin-ferredoxin oxidoreductase, converting photonic excitation into a charge separation, which transfers an electron from the donor P700 chlorophyll pair to the spectroscopically characterized acceptors A0, A1, FX, FA and FB in turn. The polypeptide is Photosystem I iron-sulfur center (Bigelowiella natans (Pedinomonas minutissima)).